Here is a 284-residue protein sequence, read N- to C-terminus: Asialoglycoprotein receptor 1 (284 aa).

The Cytoplasmic segment spans residues 1–39 (MTKDYQDFQHLDNENDHHQLQRGPPPAPRLLQRLCSGFR). The short motif at 5-8 (YQDF) is the Endocytosis signal element. A lipid anchor (S-palmitoyl cysteine) is attached at Cys-35. Residues 40–60 (LFLLSLGLSILLLVVVCVITS) traverse the membrane as a helical; Signal-anchor for type II membrane protein segment. Positions 58-122 (ITSQNSQLRE…EDLREDHSRL (65 aa)) form a coiled coil. Over 61–284 (QNSQLREDLR…VCETELGKAN (224 aa)) the chain is Extracellular. Residues Asn-75, Asn-78, and Asn-146 are each glycosylated (N-linked (GlcNAc...) asparagine). Cystine bridges form between Cys-153/Cys-164, Cys-181/Cys-276, and Cys-254/Cys-268. A C-type lectin domain is found at 160-277 (YEGSCYWFSS…CRRPYRWVCE (118 aa)). Positions 190, 196, 215, 239, 241, 242, 252, 253, 264, 265, and 277 each coordinate Ca(2+).

In terms of assembly, interacts with LASS2. Phosphorylated on a cytoplasmic Ser residue. In terms of tissue distribution, expressed exclusively in hepatic parenchymal cells.

The protein localises to the membrane. Mediates the endocytosis of plasma glycoproteins to which the terminal sialic acid residue on their complex carbohydrate moieties has been removed. The receptor recognizes terminal galactose and N-acetylgalactosamine units. After ligand binding to the receptor, the resulting complex is internalized and transported to a sorting organelle, where receptor and ligand are disassociated. The receptor then returns to the cell membrane surface. This Rattus norvegicus (Rat) protein is Asialoglycoprotein receptor 1 (Asgr1).